The sequence spans 298 residues: 1,2-dihydroxynaphthalene dioxygenase (298 aa).

VOC domains lie at 6-121 (ELGY…IFYG) and 146-267 (GIGH…FGWG). Histidine 149 is a binding site for Fe cation. Residues histidine 149, 196–197 (QH), histidine 212, and tyrosine 253 contribute to the substrate site. Histidine 212 lines the Fe cation pocket. Glutamate 263 is a Fe cation binding site.

Belongs to the extradiol ring-cleavage dioxygenase family. As to quaternary structure, homooctamer. Requires Fe(2+) as cofactor.

The catalysed reaction is naphthalene-1,2-diol + O2 = 2-hydroxychromene-2-carboxylate + H(+). Its pathway is aromatic compound metabolism; naphthalene degradation. Its function is as follows. Involved in the naphthalene and naphthalenesulfonate catabolic pathway. Catalyzes the meta-cleavage of 1,2-dihydroxynaphthalene (1,2-DHN) to yield 2-hydroxychromene-2-carboxylic acid. Can also cleave 1,2,5-trihydroxynaphthalene (1,2,5-THN), 1,2,6-trihydroxynaphthalene (1,2,6-THN), 1,2,7-trihydroxynaphthalene (1,2,7-THN), 2,3-dihydroxybiphenyl, 3,4-dihydroxybiphenyl, catechol, 3-methylcatechol and 4-methylcatechol. The chain is 1,2-dihydroxynaphthalene dioxygenase (nsaC) from Sphingobium xenophagum.